The chain runs to 117 residues: cAMP-regulated phosphoprotein 19-A (117 aa).

Over residues 1–37 (MSGENQETKAQEESSALEQKEIDDKVVSPEKSEEIKL) the composition is skewed to basic and acidic residues. Residues 1–54 (MSGENQETKAQEESSALEQKEIDDKVVSPEKSEEIKLKARYPNLGPKPGGSDFL) form a disordered region. Ser28 is subject to Phosphoserine; by CDK2. The residue at position 67 (Ser67) is a Phosphoserine; by GWL. Residues 78–117 (KNKQLPTAASDKTEVTGDHIPTPQDLPQRKPSLVASKLAG) form a disordered region. A Phosphothreonine; by CDK2 modification is found at Thr99. The residue at position 109 (Ser109) is a Phosphoserine; by PKA.

This sequence belongs to the endosulfine family. Interacts (when phosphorylated at Ser-67) with ppp2r2d. Post-translationally, phosphorylation at Ser-67 by gwl during mitosis is essential for interaction with ppp2r2d (PR55-delta) and subsequent inactivation of PP2A. Phosphorylated by PKA.

Its subcellular location is the cytoplasm. Functionally, protein phosphatase inhibitor that specifically inhibits protein phosphatase 2A (PP2A) during mitosis. When phosphorylated at Ser-67 during mitosis, specifically interacts with ppp2r2d (PR55-delta) and inhibits its activity, leading to inactivation of PP2A, an essential condition to keep cyclin-B1-CDK1 activity high during M phase. This is cAMP-regulated phosphoprotein 19-A (arpp19-a) from Xenopus laevis (African clawed frog).